We begin with the raw amino-acid sequence, 92 residues long: MVRCRVRSPSESPQQGSGQQRENERQDQDQELRPEDVPVYGRTHRGRYHYRHRSHTRRRRSCRRRRRRACRHRRHRRGCRRIRRRRRCRRRL.

The interval 1–76 (MVRCRVRSPS…RRACRHRRHR (76 aa)) is disordered. Low complexity predominate over residues 7 to 20 (RSPSESPQQGSGQQ). Phosphoserine is present on residues Ser-8 and Ser-10. The span at 21 to 36 (RENERQDQDQELRPED) shows a compositional bias: basic and acidic residues. Over residues 42 to 76 (RTHRGRYHYRHRSHTRRRRSCRRRRRRACRHRRHR) the composition is skewed to basic residues.

The protein belongs to the protamine P2 family. Interacts with TDRP. In terms of processing, proteolytic processing into mature chains is required for histone eviction during spermatogenesis. Transition proteins (TNP1 and TNP2) are required for processing. Testis.

The protein localises to the nucleus. It is found in the chromosome. Protamines substitute for histones in the chromatin of sperm during the haploid phase of spermatogenesis. They compact sperm DNA into a highly condensed, stable and inactive complex. This is Protamine-2 (PRM2) from Sus scrofa (Pig).